A 236-amino-acid chain; its full sequence is MGQKVHPNGVRLGITKTWHSTWYANNKDFSDNLGNDFKVRHFLMQKLSKALVSRIIIERPAKSIRVTVYTARPGLIIGKKGEDIEKLRKNIARISGVPTQLNIAEVRKPELDAKLLADNIASQLERRVVFRRAMKRVVQNAMRLGAKGIKVEVSGRLSGAEIARTEWYREGRVPLHTLRADIDYSLSEARTTYGIIGIKVWVFKGEILGDVLLLNTGYSSDQTINNSSKKKHKTRI.

Residues V39–R107 enclose the KH type-2 domain.

It belongs to the universal ribosomal protein uS3 family. As to quaternary structure, part of the 30S ribosomal subunit. Forms a tight complex with proteins S10 and S14.

In terms of biological role, binds the lower part of the 30S subunit head. Binds mRNA in the 70S ribosome, positioning it for translation. The polypeptide is Small ribosomal subunit protein uS3 (Blochmanniella pennsylvanica (strain BPEN)).